A 244-amino-acid chain; its full sequence is 2-C-methyl-D-erythritol 4-phosphate cytidylyltransferase (244 aa).

It belongs to the IspD/TarI cytidylyltransferase family. IspD subfamily.

It carries out the reaction 2-C-methyl-D-erythritol 4-phosphate + CTP + H(+) = 4-CDP-2-C-methyl-D-erythritol + diphosphate. It participates in isoprenoid biosynthesis; isopentenyl diphosphate biosynthesis via DXP pathway; isopentenyl diphosphate from 1-deoxy-D-xylulose 5-phosphate: step 2/6. Functionally, catalyzes the formation of 4-diphosphocytidyl-2-C-methyl-D-erythritol from CTP and 2-C-methyl-D-erythritol 4-phosphate (MEP). The chain is 2-C-methyl-D-erythritol 4-phosphate cytidylyltransferase from Solibacter usitatus (strain Ellin6076).